Consider the following 567-residue polypeptide: R-linalool synthase QH1, chloroplastic (567 aa).

The transit peptide at 1–24 directs the protein to the chloroplast; that stretch reads GNAYMRIYSTKTTRITANATVNAA. Arginine 282, aspartate 319, aspartate 323, arginine 460, and aspartate 463 together coordinate (2E)-geranyl diphosphate. Mg(2+) is bound by residues aspartate 319 and aspartate 323. The DDXXD motif signature appears at 319–323; that stretch reads DDVYD. Residues aspartate 463, threonine 467, and glutamate 471 each contribute to the Mg(2+) site.

It belongs to the terpene synthase family. Tpsb subfamily. Requires Mg(2+) as cofactor. In terms of tissue distribution, highly expressed in leaves and lower levels in inflorescences. Not detected in stems, stem epidermis, stem stele or roots.

It is found in the plastid. The protein localises to the chloroplast. It catalyses the reaction (2E)-geranyl diphosphate + H2O = (R)-linalool + diphosphate. Its pathway is secondary metabolite biosynthesis; terpenoid biosynthesis. Monoterpene synthase that catalyzes the formation of (3R)-linalool from geranyl diphosphate, but not from isopentenyl diphosphate, dimethylallyl diphosphate, chrysanthemyl diphosphate, farnesyl diphosphate, (+)-copalyl diphosphate or geranylgeranyl diphosphate. The protein is R-linalool synthase QH1, chloroplastic (QH1) of Artemisia annua (Sweet wormwood).